Consider the following 379-residue polypeptide: uncharacterized protein (379 aa).

Residue 29–36 participates in ATP binding; sequence GPLNSGKT.

It belongs to the archaeal ATPase family.

This is an uncharacterized protein from Methanocaldococcus jannaschii (strain ATCC 43067 / DSM 2661 / JAL-1 / JCM 10045 / NBRC 100440) (Methanococcus jannaschii).